Reading from the N-terminus, the 192-residue chain is Transcription termination/antitermination protein NusG (192 aa).

The region spanning 140-168 (VGEIVTVTDGPFETFMGTVEEIDQEKNRL) is the KOW domain.

This sequence belongs to the NusG family.

Functionally, participates in transcription elongation, termination and antitermination. In Rickettsia conorii (strain ATCC VR-613 / Malish 7), this protein is Transcription termination/antitermination protein NusG.